A 427-amino-acid polypeptide reads, in one-letter code: UDP-N-acetylglucosamine 1-carboxyvinyltransferase 1 (427 aa).

24-25 contributes to the phosphoenolpyruvate binding site; that stretch reads KN. A UDP-N-acetyl-alpha-D-glucosamine-binding site is contributed by Arg97. Cys121 functions as the Proton donor in the catalytic mechanism. At Cys121 the chain carries 2-(S-cysteinyl)pyruvic acid O-phosphothioketal. UDP-N-acetyl-alpha-D-glucosamine is bound by residues 126 to 130, Asp309, and Val331; that span reads RPIDL.

It belongs to the EPSP synthase family. MurA subfamily.

Its subcellular location is the cytoplasm. It catalyses the reaction phosphoenolpyruvate + UDP-N-acetyl-alpha-D-glucosamine = UDP-N-acetyl-3-O-(1-carboxyvinyl)-alpha-D-glucosamine + phosphate. It participates in cell wall biogenesis; peptidoglycan biosynthesis. Its function is as follows. Cell wall formation. Adds enolpyruvyl to UDP-N-acetylglucosamine. The chain is UDP-N-acetylglucosamine 1-carboxyvinyltransferase 1 from Lactococcus lactis subsp. lactis (strain IL1403) (Streptococcus lactis).